The sequence spans 203 residues: Thymidylate kinase (203 aa).

9–16 contacts ATP; the sequence is GPEGAGKT.

Belongs to the thymidylate kinase family.

The enzyme catalyses dTMP + ATP = dTDP + ADP. Its function is as follows. Phosphorylation of dTMP to form dTDP in both de novo and salvage pathways of dTTP synthesis. The sequence is that of Thymidylate kinase from Staphylococcus epidermidis (strain ATCC 35984 / DSM 28319 / BCRC 17069 / CCUG 31568 / BM 3577 / RP62A).